The following is a 329-amino-acid chain: Short-chain dehydrogenase/reductase prx4 (329 aa).

The N-terminal stretch at methionine 1–cysteine 21 is a signal peptide. Positions 58, 60, and 81 each coordinate NADP(+). Residue asparagine 91 is glycosylated (N-linked (GlcNAc...) asparagine). The NADP(+) site is built by aspartate 98, asparagine 121, lysine 161, tyrosine 194, lysine 198, and threonine 229. Tyrosine 194 serves as the catalytic Proton acceptor. The active-site Lowers pKa of active site Tyr is the lysine 198. A helical membrane pass occupies residues glycine 238–valine 258.

This sequence belongs to the short-chain dehydrogenases/reductases (SDR) family.

It localises to the membrane. Its pathway is sesquiterpene biosynthesis. Short-chain dehydrogenase/reductase; part of the gene cluster that mediates the biosynthesis of PR-toxin, a bicyclic sesquiterpene belonging to the eremophilane class and acting as a mycotoxin. The first step of the pathway is catalyzed by the aristolochene synthase which performs the cyclization of trans,trans-farnesyl diphosphate (FPP) to the bicyclic sesquiterpene aristolochene. Following the formation of aristolochene, the non-oxygenated aristolochene is converted to the trioxygenated intermediate eremofortin B, via 7-epi-neopetasone. This conversion appears to involve three enzymes, a hydroxysterol oxidase-like enzyme, the quinone-oxidase prx3 that forms the quinone-type-structure in the bicyclic nucleus of aristolochene with the C8-oxo group and the C-3 hydroxyl group, and the P450 monooxygenase prx9 that introduces the epoxide at the double bond between carbons 1 and 2. No monoxy or dioxy-intermediates have been reported to be released to the broth, so these three early oxidative reactions may be coupled together. Eremofortin B is further oxidized by another P450 monooxygenase, that introduces a second epoxide between carbons 7 and 11 prior to acetylation to eremofortin A by the acetyltransferase prx11. The second epoxidation may be performed by a second P450 monooxygenase. After the acetylation step, eremofortin A is converted to eremofortin C and then to PR-toxin. First the conversion of eremofortin A to eremofortin C proceeds by oxidation of the side chain of the molecule at C-12 and is catalyzed by the short-chain oxidoreductase prx1. The cytochrome P450 monooxygenase prx8 also plays a role in this step. The primary alcohol formed at C-12 is finally oxidized by the short-chain alcohol dehydrogenase prx4 that forms PR-toxin. The polypeptide is Short-chain dehydrogenase/reductase prx4 (Penicillium rubens (strain ATCC 28089 / DSM 1075 / NRRL 1951 / Wisconsin 54-1255) (Penicillium chrysogenum)).